Here is a 138-residue protein sequence, read N- to C-terminus: Nucleoside diphosphate kinase (138 aa).

ATP-binding residues include K9, F57, R85, T91, R102, and N112. H120 serves as the catalytic Pros-phosphohistidine intermediate.

It belongs to the NDK family. In terms of assembly, homotetramer. The cofactor is Mg(2+).

The protein resides in the cytoplasm. The enzyme catalyses a 2'-deoxyribonucleoside 5'-diphosphate + ATP = a 2'-deoxyribonucleoside 5'-triphosphate + ADP. The catalysed reaction is a ribonucleoside 5'-diphosphate + ATP = a ribonucleoside 5'-triphosphate + ADP. Functionally, major role in the synthesis of nucleoside triphosphates other than ATP. The ATP gamma phosphate is transferred to the NDP beta phosphate via a ping-pong mechanism, using a phosphorylated active-site intermediate. In Streptococcus agalactiae serotype V (strain ATCC BAA-611 / 2603 V/R), this protein is Nucleoside diphosphate kinase.